Consider the following 220-residue polypeptide: Uracil-DNA glycosylase (220 aa).

The Proton acceptor role is filled by D65.

The protein belongs to the uracil-DNA glycosylase (UDG) superfamily. UNG family.

It localises to the cytoplasm. The enzyme catalyses Hydrolyzes single-stranded DNA or mismatched double-stranded DNA and polynucleotides, releasing free uracil.. Its function is as follows. Excises uracil residues from the DNA which can arise as a result of misincorporation of dUMP residues by DNA polymerase or due to deamination of cytosine. The protein is Uracil-DNA glycosylase of Azobacteroides pseudotrichonymphae genomovar. CFP2.